The chain runs to 188 residues: Elongation factor P (188 aa).

Lysine 34 carries the N6-(3,6-diaminohexanoyl)-5-hydroxylysine modification.

It belongs to the elongation factor P family. Post-translationally, may be beta-lysylated on the epsilon-amino group of Lys-34 by the combined action of EpmA and EpmB, and then hydroxylated on the C5 position of the same residue by EpmC (if this protein is present). Lysylation is critical for the stimulatory effect of EF-P on peptide-bond formation. The lysylation moiety may extend toward the peptidyltransferase center and stabilize the terminal 3-CCA end of the tRNA. Hydroxylation of the C5 position on Lys-34 may allow additional potential stabilizing hydrogen-bond interactions with the P-tRNA.

The protein resides in the cytoplasm. It functions in the pathway protein biosynthesis; polypeptide chain elongation. Its function is as follows. Involved in peptide bond synthesis. Alleviates ribosome stalling that occurs when 3 or more consecutive Pro residues or the sequence PPG is present in a protein, possibly by augmenting the peptidyl transferase activity of the ribosome. Modification of Lys-34 is required for alleviation. This Erwinia tasmaniensis (strain DSM 17950 / CFBP 7177 / CIP 109463 / NCPPB 4357 / Et1/99) protein is Elongation factor P.